The sequence spans 59 residues: Large ribosomal subunit protein bL32 (59 aa).

Positions 1-16 (MAVPKRKVSPHRRGNR) are enriched in basic residues. The tract at residues 1–20 (MAVPKRKVSPHRRGNRRAHD) is disordered.

The protein belongs to the bacterial ribosomal protein bL32 family.

This is Large ribosomal subunit protein bL32 from Erythrobacter litoralis (strain HTCC2594).